Here is an 896-residue protein sequence, read N- to C-terminus: Echinoderm microtubule-associated protein-like 3 (896 aa).

An N-acetylmethionine modification is found at M1. Residues 16–43 (LQSLSQRLRVQEQEMELVKAALAEALRL) adopt a coiled-coil conformation. The segment at 50-209 (PSSLQGSGTP…GGPGSRRSNY (160 aa)) is disordered. The segment covering 77–88 (TPSLVSRGTQTE) has biased composition (polar residues). The span at 134 to 145 (PGPPGILRPLQP) shows a compositional bias: pro residues. Positions 154–163 (RNSSSSSSPS) are enriched in low complexity. Residues 174–189 (AISSANLLVRSGSTES) are compositionally biased toward polar residues. A phosphoserine mark is found at S176, S198, and S204. WD repeat units lie at residues 234–286 (RSLE…LYRP), 295–344 (GGGQ…IWDS), 350–392 (LQEI…VWDC), 398–434 (LAEI…FWNW), 448–487 (RKQG…TWGR), 504–543 (YGIV…QWGP), 549–584 (QEAE…LRGD), 589–626 (FSPV…LWDG), 629–667 (HALA…VLDT), 674–709 (SDVI…IYSV), 716–755 (SSRF…YWDV), 765–823 (RYES…LFQY), and 830–869 (APSR…QWRV). Positions 876–896 (GPAPATPSRTPSLSPASSLDV) are disordered. Low complexity predominate over residues 877 to 896 (PAPATPSRTPSLSPASSLDV). A Phosphothreonine; by CDK1 modification is found at T881. Phosphoserine is present on S883.

It belongs to the WD repeat EMAP family. Homotrimer; self-association is mediated by the N-terminal coiled coil. Interacts with EML2 but not with EML1. Interacts (phosphorylated at Thr-881) with TUBG1, HAUS1, HAUS2, HAUS3, HAUS4, HAUS5, HAUS6, HAUS7 and HAUS8. Phosphorylation at Thr-881 during mitosis is required for interaction with TUBG1, HAUS1, HAUS2, HAUS3, HAUS4, HAUS5, HAUS6, HAUS7 and HAUS8 and their recruitment to spindle microtubules.

The protein resides in the cytoplasm. It is found in the cytoskeleton. The protein localises to the nucleus. It localises to the midbody. Its subcellular location is the spindle. In terms of biological role, regulates mitotic spindle assembly, microtubule (MT)-kinetochore attachment and chromosome separation via recruitment of HAUS augmin-like complex and TUBG1 to the existing MTs and promoting MT-based MT nucleation. Required for proper alignnment of chromosomes during metaphase. This Homo sapiens (Human) protein is Echinoderm microtubule-associated protein-like 3 (EML3).